Consider the following 372-residue polypeptide: MARQQTKKNYSLRKLKTGTASVAVALTVLGAGFANQTEVRADEAKKMEVKESEKESQYKTLALRGENADLRNVNAKYLEKINAEEEKNKKLEAINKELNENYYKLQDGIDALEKEKEDLKTTLAKTTKENEISEASRKGLSRDLEASRTAKKELEAKHQKLEAENKKLTEGNQVSEASRKGLSNDLEASRAAKKELEAKYQKLETDHQALEAKHQKLEADYQVSETSRKGLSRDLEASREANKKVTSELTQAKAQLSALEESKKLSEKEKAELQAKLDAQGKALKEQLAKQTEELAKLRAEKAAGSKTPATKPANKERSGRAAQTATRPSQNKGMRSQLPSTGEAANPFFTAAAATVMVSAGMLALKRKEEN.

The first 41 residues, 1–41 (MARQQTKKNYSLRKLKTGTASVAVALTVLGAGFANQTEVRA), serve as a signal peptide directing secretion. C repeat units lie at residues 124-158 (AKTTKENEISEASRKGLSRDLEASRTAKKELEAKH), 166-200 (KKLTEGNQVSEASRKGLSNDLEASRAAKKELEAKY), and 215-249 (QKLEADYQVSETSRKGLSRDLEASREANKKVTSEL). Basic and acidic residues-rich tracts occupy residues 125–169 (KTTK…KKLT), 226–246 (TSRKGLSRDLEASREANKKVT), and 260–274 (EESKKLSEKEKAELQ). Disordered regions lie at residues 125–191 (KTTK…ASRA) and 211–274 (EAKH…AELQ). 4 D repeats span residues 275–280 (AKLDAQ), 281–286 (GKALKE), 289–294 (AKQTEE), and 296–301 (AKLRAE). The segment covering 295–304 (LAKLRAEKAA) has biased composition (basic and acidic residues). Residues 295-344 (LAKLRAEKAAGSKTPATKPANKERSGRAAQTATRPSQNKGMRSQLPSTGE) are disordered. Over residues 322 to 341 (AAQTATRPSQNKGMRSQLPS) the composition is skewed to polar residues. Positions 339-343 (LPSTG) match the LPXTG sorting signal motif. The residue at position 342 (Thr-342) is a Pentaglycyl murein peptidoglycan amidated threonine. A propeptide spans 343–372 (GEAANPFFTAAAATVMVSAGMLALKRKEEN) (removed by sortase).

Belongs to the M protein family.

It localises to the secreted. Its subcellular location is the cell wall. This protein is one of the different antigenic serotypes of protein M. Protein M is closely associated with virulence of the bacterium and can render the organism resistant to phagocytosis. The polypeptide is M protein, serotype 2.2 (emmL2.2) (Streptococcus pyogenes).